We begin with the raw amino-acid sequence, 354 residues long: Uroporphyrinogen decarboxylase (354 aa).

Substrate is bound by residues 27–31 (RQAGR), D77, Y154, T209, and H327.

The protein belongs to the uroporphyrinogen decarboxylase family. In terms of assembly, homodimer.

Its subcellular location is the cytoplasm. It catalyses the reaction uroporphyrinogen III + 4 H(+) = coproporphyrinogen III + 4 CO2. Its pathway is porphyrin-containing compound metabolism; protoporphyrin-IX biosynthesis; coproporphyrinogen-III from 5-aminolevulinate: step 4/4. In terms of biological role, catalyzes the decarboxylation of four acetate groups of uroporphyrinogen-III to yield coproporphyrinogen-III. This chain is Uroporphyrinogen decarboxylase, found in Salmonella heidelberg (strain SL476).